Consider the following 621-residue polypeptide: uncharacterized protein (621 aa).

2 disordered regions span residues 92–134 (FRNS…QINQ) and 268–310 (KINH…DDEI). Residues 94-134 (NSSNQSSQSNQVNQSNQSSPSSQISPSSQVNKFNQSSQINQ) are compositionally biased toward low complexity. Positions 296-310 (TNDETNDETDNDDEI) are enriched in acidic residues. Residues 354 to 401 (ANKIQNKIIQIVETLNAYKNKQSQIAIEAKNKIKHITVSNKEVSENIE) adopt a coiled-coil conformation.

This is an uncharacterized protein from Acanthamoeba polyphaga mimivirus (APMV).